The sequence spans 209 residues: High frequency lysogenization protein HflD homolog (209 aa).

The protein belongs to the HflD family.

The protein resides in the cytoplasm. It localises to the cell inner membrane. In Halorhodospira halophila (strain DSM 244 / SL1) (Ectothiorhodospira halophila (strain DSM 244 / SL1)), this protein is High frequency lysogenization protein HflD homolog.